Here is a 558-residue protein sequence, read N- to C-terminus: Potassium-transporting ATPase potassium-binding subunit (558 aa).

A run of 12 helical transmembrane segments spans residues 1-21 (MEIILFLTMMVMIAYVFSGYL), 66-86 (FNGFMGLITFVLLIVQQWLFL), 127-147 (MIVMTYLMFTSSASGYAVCIA), 166-186 (IVRFIVRVLLPLSCLISILLM), 245-265 (IWSDFIEMGSMMLLPMSMLFL), 281-301 (ALILFVAMFFIFIAILTLTMW), 327-347 (FGAGLSALFTVITTAFTTGSV), 354-374 (LTPLGGLGPMVLMMLNVVFGG), 377-397 (VGLMNLLIYVLLTVFICSLMV), 416-436 (IVLVFLIHPILILVFSALAFM), 482-502 (ISTGIIMLLSRYIPIILQLLI), and 531-551 (IVFIVLLSGLTFIPVLLLGPI).

It belongs to the KdpA family. The system is composed of three essential subunits: KdpA, KdpB and KdpC.

Its subcellular location is the cell membrane. In terms of biological role, part of the high-affinity ATP-driven potassium transport (or Kdp) system, which catalyzes the hydrolysis of ATP coupled with the electrogenic transport of potassium into the cytoplasm. This subunit binds the extracellular potassium ions and delivers the ions to the membrane domain of KdpB through an intramembrane tunnel. In Staphylococcus aureus (strain bovine RF122 / ET3-1), this protein is Potassium-transporting ATPase potassium-binding subunit.